Reading from the N-terminus, the 207-residue chain is Urease accessory protein UreG (207 aa).

13-20 (GPVGSGKT) serves as a coordination point for GTP.

Belongs to the SIMIBI class G3E GTPase family. UreG subfamily. As to quaternary structure, homodimer. UreD, UreF and UreG form a complex that acts as a GTP-hydrolysis-dependent molecular chaperone, activating the urease apoprotein by helping to assemble the nickel containing metallocenter of UreC. The UreE protein probably delivers the nickel.

The protein resides in the cytoplasm. Its function is as follows. Facilitates the functional incorporation of the urease nickel metallocenter. This process requires GTP hydrolysis, probably effectuated by UreG. This chain is Urease accessory protein UreG, found in Azoarcus sp. (strain BH72).